A 684-amino-acid chain; its full sequence is ATP-dependent zinc metalloprotease FtsH (684 aa).

At 1-21 (MENKNDMFNKTPKSGKPKMFR) the chain is on the cytoplasmic side. Residues 22–42 (FNLYWMYGLIFIMLVALYMTN) form a helical membrane-spanning segment. Residues 43–138 (DSSGTKELGW…QVRFEEGDDA (96 aa)) are Periplasmic-facing. A helical transmembrane segment spans residues 139–159 (IWNFLVSFGPIILLIGVWMFL). Topologically, residues 160 to 684 (MRRMSGGTGA…TEENKTGKIA (525 aa)) are cytoplasmic. Position 236–243 (236–243 (GPPGTGKT)) interacts with ATP. H459 provides a ligand contact to Zn(2+). E460 is an active-site residue. Zn(2+)-binding residues include H463 and D534. Residues 647-662 (EKANGKNKENADKEAE) are compositionally biased toward basic and acidic residues. A disordered region spans residues 647–684 (EKANGKNKENADKEAEADATTENVTDTPTEENKTGKIA).

This sequence in the central section; belongs to the AAA ATPase family. The protein in the C-terminal section; belongs to the peptidase M41 family. As to quaternary structure, homohexamer. Zn(2+) serves as cofactor.

The protein localises to the cell inner membrane. Its function is as follows. Acts as a processive, ATP-dependent zinc metallopeptidase for both cytoplasmic and membrane proteins. Plays a role in the quality control of integral membrane proteins. The polypeptide is ATP-dependent zinc metalloprotease FtsH (Parabacteroides distasonis (strain ATCC 8503 / DSM 20701 / CIP 104284 / JCM 5825 / NCTC 11152)).